We begin with the raw amino-acid sequence, 110 residues long: Class I hydrophobin 2 (110 aa).

An N-terminal signal peptide occupies residues Met-1–Ala-17. Cystine bridges form between Cys-28-Cys-89, Cys-36-Cys-83, Cys-37-Cys-71, and Cys-90-Cys-103. Asn-57 is a glycosylation site (N-linked (GlcNAc...) asparagine).

This sequence belongs to the fungal hydrophobin family. In terms of assembly, self-assembles to form functional amyloid fibrils called rodlets. Self-assembly into fibrillar rodlets occurs spontaneously at hydrophobic:hydrophilic interfaces and the rodlets further associate laterally to form amphipathic monolayers.

It is found in the secreted. It localises to the cell wall. Its function is as follows. Aerial growth, conidiation, and dispersal of filamentous fungi in the environment rely upon a capability of their secreting small amphipathic proteins called hydrophobins (HPBs) with low sequence identity. Class I can self-assemble into an outermost layer of rodlet bundles on aerial cell surfaces, conferring cellular hydrophobicity that supports fungal growth, development and dispersal; whereas Class II form highly ordered films at water-air interfaces through intermolecular interactions but contribute nothing to the rodlet structure. CoH2 is an asexual monokaryon-specific class I hydrophobin that is involved in aerial growth of mycelia. The sequence is that of Class I hydrophobin 2 from Coprinopsis cinerea (Inky cap fungus).